A 225-amino-acid polypeptide reads, in one-letter code: Ribonuclease 3 (225 aa).

An RNase III domain is found at 5–127; that stretch reads MNKLTSKLGY…IIGAIYLDSD (123 aa). Mg(2+) is bound at residue E40. The active site involves D44. Mg(2+) contacts are provided by D113 and E116. Residue E116 is part of the active site. One can recognise a DRBM domain in the interval 154–224; the sequence is DPKTRLQEFL…AETALEQLTN (71 aa).

It belongs to the ribonuclease III family. In terms of assembly, homodimer. Mg(2+) is required as a cofactor.

The protein resides in the cytoplasm. The catalysed reaction is Endonucleolytic cleavage to 5'-phosphomonoester.. Functionally, digests double-stranded RNA. Involved in the processing of primary rRNA transcript to yield the immediate precursors to the large and small rRNAs (23S and 16S). Processes some mRNAs, and tRNAs when they are encoded in the rRNA operon. Processes pre-crRNA and tracrRNA of type II CRISPR loci if present in the organism. The protein is Ribonuclease 3 of Vibrio cholerae serotype O1 (strain ATCC 39315 / El Tor Inaba N16961).